We begin with the raw amino-acid sequence, 796 residues long: Armadillo repeat-containing protein wrm-1 (796 aa).

The segment at 17–59 is disordered; sequence NFNPMTPSTSRVSTPVRPSSTMSARQYSGSPFKAQPQNMEPSN. The stretch at 462–504 is one ARM repeat; it reads ESIHCIVQLIGCSDVTIVELATGTLRNIGLHNKMNKAFMVQDG.

As to quaternary structure, interacts (independently of ARM repeat) with nhr-25. Component of the beta-catenin-lit-1 complex (also called the lit-1/wrm-1 complex or the wrm-1/lit-1 kinase complex) at least composed of lit-1 and wrm-1. Interacts (via N-terminus) with lit-1; the interaction is direct and activates lit-1 kinase activity which leads to the phosphorylation of pop-1. This promotes pop-1 interaction with par-5 and translocation of pop-1 from the nucleus to the cytoplasm.

The protein localises to the cytoplasm. It is found in the cell cortex. It localises to the nucleus. Its function is as follows. Antagonistic role in the Wnt signaling pathway that operates in embryogenesis. When located at the cortex it has been shown to inhibit Wnt signaling during asymmetric cell division but when relocated to the nucleus it shows positive regulation. Has a role in blastomere signaling during endoderm specification. Component of the beta-catenin-lit-1 complex which promotes phosphorylation, down-regulation and subcellular relocation of pop-1. Within the complex, activates lit-1-dependent kinase activity. Can substitute for bar-1 indicating functional redundancy. Appears to have a role in centrosome positioning and can activation transcription in yeast. Involved in the development of distal tip cells (DTC) by regulating the asymmetric distribution of cye-1 and cki-1 between the daughters of Z1.a and Z4.p cells. The polypeptide is Armadillo repeat-containing protein wrm-1 (Caenorhabditis elegans).